The following is a 458-amino-acid chain: Phosphoglucosamine mutase (458 aa).

Catalysis depends on S106, which acts as the Phosphoserine intermediate. S106, D247, D249, and D251 together coordinate Mg(2+). S106 carries the post-translational modification Phosphoserine.

Belongs to the phosphohexose mutase family. It depends on Mg(2+) as a cofactor. Activated by phosphorylation.

The catalysed reaction is alpha-D-glucosamine 1-phosphate = D-glucosamine 6-phosphate. Functionally, catalyzes the conversion of glucosamine-6-phosphate to glucosamine-1-phosphate. The sequence is that of Phosphoglucosamine mutase from Chlamydia pneumoniae (Chlamydophila pneumoniae).